Consider the following 823-residue polypeptide: Protein Jade-3 (823 aa).

Residues 1–32 (MKRHRPVSSSDSSDESPSTSFTSGSMYRIKSK) are disordered. Low complexity predominate over residues 8–25 (SSSDSSDESPSTSFTSGS). N6-acetyllysine occurs at positions 30 and 32. S85 carries the phosphoserine modification. The PHD-type 1 zinc-finger motif lies at 200–250 (DVICDVCRSPDSEEGNDMVFCDKCNVCVHQACYGILKVPEGSWLCRSCVLG). The C2HC pre-PHD-type zinc-finger motif lies at 252 to 286 (YPQCVLCPKKGGALKTTKTGTKWAHVSCALWIPEV). The PHD-type 2 zinc finger occupies 310–366 (LVCNLCKLKTGACIQCSIKSCITAFHVTCAFEHGLEMKTILDEGDEVKFKSYCLKHS). 2 disordered regions span residues 372–395 (LGEA…KTSL) and 542–576 (KLKM…VHSI). Low complexity predominate over residues 561-575 (DQQPHSPDSSSSVHS). S566 is subject to Phosphoserine. K601 carries the post-translational modification N6-acetyllysine. S608 is modified (phosphoserine). Residues 609-630 (LSHSRSEAKESSPAWRTPSSEC) form a disordered region. Residue K638 is modified to N6-acetyllysine. Polar residues-rich tracts occupy residues 650-664 (SSIG…SKFA) and 673-684 (WSGNVTQKDSSS). The tract at residues 650 to 684 (SSIGNGKSQPNSKFAKSNGLEGSWSGNVTQKDSSS) is disordered. K735 carries the post-translational modification N6-acetyllysine. The interval 758-823 (RAPYQENDGY…HPLSHSSMQR (66 aa)) is disordered. 3 positions are modified to phosphoserine: S774, S776, and S780. Residues 781–809 (DGNKEKVRVRKDSSDRENPPHDSRRDCHG) are compositionally biased toward basic and acidic residues.

Belongs to the JADE family. In terms of assembly, component of the HBO1 complex composed at least of ING4 or ING5, KAT7/HBO1, MEAF6, and one of JADE1, JADE2 and JADE3. In terms of tissue distribution, ubiquitously expressed, with highest levels in placenta and uterus.

Scaffold subunit of some HBO1 complexes, which have a histone H4 acetyltransferase activity. The polypeptide is Protein Jade-3 (JADE3) (Homo sapiens (Human)).